Here is a 149-residue protein sequence, read N- to C-terminus: Nucleoside diphosphate kinase (149 aa).

Residues Lys9, Phe57, Arg85, Thr91, Arg102, and Asn112 each contribute to the ATP site. His115 serves as the catalytic Pros-phosphohistidine intermediate.

Belongs to the NDK family. As to quaternary structure, homotetramer. The cofactor is Mg(2+).

It localises to the cytoplasm. The catalysed reaction is a 2'-deoxyribonucleoside 5'-diphosphate + ATP = a 2'-deoxyribonucleoside 5'-triphosphate + ADP. The enzyme catalyses a ribonucleoside 5'-diphosphate + ATP = a ribonucleoside 5'-triphosphate + ADP. Functionally, major role in the synthesis of nucleoside triphosphates other than ATP. The ATP gamma phosphate is transferred to the NDP beta phosphate via a ping-pong mechanism, using a phosphorylated active-site intermediate. The chain is Nucleoside diphosphate kinase from Carboxydothermus hydrogenoformans (strain ATCC BAA-161 / DSM 6008 / Z-2901).